The following is a 31-amino-acid chain: GFNPCGETCIWFPTCHAPGCTCSIANICVRN.

Positions 1-31 (GFNPCGETCIWFPTCHAPGCTCSIANICVRN) form a cross-link, cyclopeptide (Gly-Asn). Disulfide bonds link cysteine 5–cysteine 20, cysteine 9–cysteine 22, and cysteine 15–cysteine 28.

This is a cyclic peptide.

Functionally, probably participates in a plant defense mechanism. In Psychotria brachyceras, this protein is Cyclotide psybry A.